A 323-amino-acid polypeptide reads, in one-letter code: tRNA dimethylallyltransferase (323 aa).

15–22 contacts ATP; the sequence is GATGSGKT. 17 to 22 provides a ligand contact to substrate; it reads TGSGKT. Interaction with substrate tRNA stretches follow at residues 40 to 43 and 164 to 168; these read DSRQ and QRLIR.

This sequence belongs to the IPP transferase family. As to quaternary structure, monomer. The cofactor is Mg(2+).

It carries out the reaction adenosine(37) in tRNA + dimethylallyl diphosphate = N(6)-dimethylallyladenosine(37) in tRNA + diphosphate. Functionally, catalyzes the transfer of a dimethylallyl group onto the adenine at position 37 in tRNAs that read codons beginning with uridine, leading to the formation of N6-(dimethylallyl)adenosine (i(6)A). The polypeptide is tRNA dimethylallyltransferase (Chloroherpeton thalassium (strain ATCC 35110 / GB-78)).